The chain runs to 272 residues: Tryptophan synthase alpha chain (272 aa).

Active-site proton acceptor residues include E60 and D71.

This sequence belongs to the TrpA family. As to quaternary structure, tetramer of two alpha and two beta chains.

It catalyses the reaction (1S,2R)-1-C-(indol-3-yl)glycerol 3-phosphate + L-serine = D-glyceraldehyde 3-phosphate + L-tryptophan + H2O. It functions in the pathway amino-acid biosynthesis; L-tryptophan biosynthesis; L-tryptophan from chorismate: step 5/5. In terms of biological role, the alpha subunit is responsible for the aldol cleavage of indoleglycerol phosphate to indole and glyceraldehyde 3-phosphate. The chain is Tryptophan synthase alpha chain from Methanosarcina acetivorans (strain ATCC 35395 / DSM 2834 / JCM 12185 / C2A).